Consider the following 113-residue polypeptide: Large ribosomal subunit protein bL19 (113 aa).

It belongs to the bacterial ribosomal protein bL19 family.

Functionally, this protein is located at the 30S-50S ribosomal subunit interface and may play a role in the structure and function of the aminoacyl-tRNA binding site. This is Large ribosomal subunit protein bL19 from Corynebacterium urealyticum (strain ATCC 43042 / DSM 7109).